A 314-amino-acid polypeptide reads, in one-letter code: GDSL-like esterase Rv1075c (314 aa).

A signal peptide spans 1–21; that stretch reads MPRRSTIALATAGALASTGTA. Residue S80 is the Nucleophile of the active site. D244 (proton donor) is an active-site residue. Catalysis depends on H247, which acts as the Proton acceptor. Residues 276 to 314 form a disordered region; sequence IHETPSRPGTATLEPGHTRHSMMSRLRRPRPARAVPTGG. Positions 293 to 306 are enriched in basic residues; it reads TRHSMMSRLRRPRP.

It belongs to the 'GDSL' lipolytic enzyme family.

It catalyses the reaction an acetyl ester + H2O = an aliphatic alcohol + acetate + H(+). It carries out the reaction a butanoate ester + H2O = an aliphatic alcohol + butanoate + H(+). The catalysed reaction is triacetin + H2O = diacetylglycerol + acetate + H(+). The enzyme catalyses 1,2,3-tributanoylglycerol + H2O = dibutanoylglycerol + butanoate + H(+). With respect to regulation, esterase activity is significantly inhibited by the serine modifier phenylmethylsulfonyl fluoride (PMSF). Completely inhibited by diethyl pyrocarbonate. Its function is as follows. Esterase that preferentially hydrolyzes short-chain fatty acids, particularly pNP-acetate (C2) and pNP-butyrate (C4). Also has weak activity with pNP-hexanoate (C6) and pNP-octanoate (C8). It can also hydrolyze short-chain tryglycerides such as triacetin and tributyrin. Important for intracellular survival. The sequence is that of GDSL-like esterase Rv1075c from Mycobacterium tuberculosis (strain ATCC 25618 / H37Rv).